A 159-amino-acid chain; its full sequence is Urease accessory protein UreE (159 aa).

It belongs to the UreE family.

The protein localises to the cytoplasm. Functionally, involved in urease metallocenter assembly. Binds nickel. Probably functions as a nickel donor during metallocenter assembly. The polypeptide is Urease accessory protein UreE (Acinetobacter baylyi (strain ATCC 33305 / BD413 / ADP1)).